The primary structure comprises 172 residues: Glutamyl-tRNA(Gln) amidotransferase subunit C-3, mitochondrial (172 aa).

A disordered region spans residues 49-71 (KHPSKVPQRPNKSTIDGQSTPTR). Polar residues predominate over residues 58 to 71 (PNKSTIDGQSTPTR).

Belongs to the GatC family. Subunit of the heterotrimeric GatCAB amidotransferase (AdT) complex, composed of A, B and C subunits.

The protein resides in the mitochondrion. It catalyses the reaction L-glutamyl-tRNA(Gln) + L-glutamine + ATP + H2O = L-glutaminyl-tRNA(Gln) + L-glutamate + ADP + phosphate + H(+). Its function is as follows. Allows the formation of correctly charged Gln-tRNA(Gln) through the transamidation of misacylated Glu-tRNA(Gln) in the mitochondria. The reaction takes place in the presence of glutamine and ATP through an activated gamma-phospho-Glu-tRNA(Gln). This Culex quinquefasciatus (Southern house mosquito) protein is Glutamyl-tRNA(Gln) amidotransferase subunit C-3, mitochondrial.